A 104-amino-acid polypeptide reads, in one-letter code: Large ribosomal subunit protein bL21 (104 aa).

It belongs to the bacterial ribosomal protein bL21 family. In terms of assembly, part of the 50S ribosomal subunit. Contacts protein L20.

Functionally, this protein binds to 23S rRNA in the presence of protein L20. This is Large ribosomal subunit protein bL21 from Streptococcus uberis (strain ATCC BAA-854 / 0140J).